Here is a 159-residue protein sequence, read N- to C-terminus: Phosphopantetheine adenylyltransferase (159 aa).

Residue threonine 10 coordinates substrate. ATP is bound by residues 10–11 and histidine 18; that span reads TF. Residues lysine 42, leucine 74, and arginine 88 each contribute to the substrate site. ATP is bound by residues 89–91, glutamate 99, and 124–130; these read GLR and NSFISST.

This sequence belongs to the bacterial CoaD family. Homohexamer. Requires Mg(2+) as cofactor.

The protein resides in the cytoplasm. The catalysed reaction is (R)-4'-phosphopantetheine + ATP + H(+) = 3'-dephospho-CoA + diphosphate. The protein operates within cofactor biosynthesis; coenzyme A biosynthesis; CoA from (R)-pantothenate: step 4/5. Its function is as follows. Reversibly transfers an adenylyl group from ATP to 4'-phosphopantetheine, yielding dephospho-CoA (dPCoA) and pyrophosphate. The polypeptide is Phosphopantetheine adenylyltransferase (Shewanella halifaxensis (strain HAW-EB4)).